The chain runs to 186 residues: Ribosome maturation factor RimM (186 aa).

A PRC barrel domain is found at 100 to 182 (NEGEYHVSDL…RIEINPPVGL (83 aa)).

The protein belongs to the RimM family. Binds ribosomal protein uS19.

It localises to the cytoplasm. An accessory protein needed during the final step in the assembly of 30S ribosomal subunit, possibly for assembly of the head region. Essential for efficient processing of 16S rRNA. May be needed both before and after RbfA during the maturation of 16S rRNA. It has affinity for free ribosomal 30S subunits but not for 70S ribosomes. This chain is Ribosome maturation factor RimM, found in Rippkaea orientalis (strain PCC 8801 / RF-1) (Cyanothece sp. (strain PCC 8801)).